A 461-amino-acid polypeptide reads, in one-letter code: D-phenylhydantoinase (461 aa).

Residues His-59, His-61, and Lys-151 each coordinate a divalent metal cation. An N6-carboxylysine modification is found at Lys-151. Tyr-156 provides a ligand contact to substrate. Positions 182 and 239 each coordinate a divalent metal cation. Ser-286 serves as a coordination point for substrate. Asp-313 provides a ligand contact to a divalent metal cation. Residue Asn-335 participates in substrate binding.

Belongs to the metallo-dependent hydrolases superfamily. Hydantoinase/dihydropyrimidinase family. Homotetramer. A divalent metal cation serves as cofactor. In terms of processing, carboxylation allows a single lysine to coordinate two divalent metal cations.

The enzyme catalyses D-5-phenylhydantoin + H2O = N-carbamoyl-D-phenylglycine + H(+). Functionally, catalyzes the stereospecific hydrolysis of the cyclic amide bond of D-hydantoin derivatives with an aromatic side chains at the 5'-position. Has no activity on dihydropyrimidines. The physiological function is unknown. The sequence is that of D-phenylhydantoinase from Escherichia coli O17:K52:H18 (strain UMN026 / ExPEC).